The chain runs to 384 residues: Galactokinase (384 aa).

Substrate is bound at residue 34-37 (EHTD). 123–129 (SSGLSSS) is an ATP binding site. Ser129 and Glu161 together coordinate Mg(2+). Residue Asp173 is the Proton acceptor of the active site. Tyr222 is a substrate binding site.

The protein belongs to the GHMP kinase family. GalK subfamily.

Its subcellular location is the cytoplasm. The enzyme catalyses alpha-D-galactose + ATP = alpha-D-galactose 1-phosphate + ADP + H(+). The protein operates within carbohydrate metabolism; galactose metabolism. In terms of biological role, catalyzes the transfer of the gamma-phosphate of ATP to D-galactose to form alpha-D-galactose-1-phosphate (Gal-1-P). This Actinobacillus pleuropneumoniae serotype 5b (strain L20) protein is Galactokinase.